The chain runs to 128 residues: Ribonuclease pancreatic B (128 aa).

The segment at 1 to 21 is disordered; sequence AESSAMKFQRQHMDPEGSPSN. Positions 7 and 10 each coordinate substrate. His12 (proton acceptor) is an active-site residue. Residues Asn21 and Asn34 are each glycosylated (N-linked (GlcNAc...) asparagine). Disulfide bonds link Cys26–Cys84, Cys40–Cys95, Cys58–Cys110, and Cys65–Cys72. Residues 41 to 45, Lys66, and Arg85 each bind substrate; that span reads KPVNT. The active-site Proton donor is His119.

The protein belongs to the pancreatic ribonuclease family. As to expression, pancreas.

It is found in the secreted. The catalysed reaction is an [RNA] containing cytidine + H2O = an [RNA]-3'-cytidine-3'-phosphate + a 5'-hydroxy-ribonucleotide-3'-[RNA].. It catalyses the reaction an [RNA] containing uridine + H2O = an [RNA]-3'-uridine-3'-phosphate + a 5'-hydroxy-ribonucleotide-3'-[RNA].. This chain is Ribonuclease pancreatic B, found in Cavia porcellus (Guinea pig).